The following is a 117-amino-acid chain: Holo-[acyl-carrier-protein] synthase (117 aa).

Residues Asp-8 and Glu-58 each coordinate Mg(2+).

This sequence belongs to the P-Pant transferase superfamily. AcpS family. It depends on Mg(2+) as a cofactor.

Its subcellular location is the cytoplasm. The catalysed reaction is apo-[ACP] + CoA = holo-[ACP] + adenosine 3',5'-bisphosphate + H(+). In terms of biological role, transfers the 4'-phosphopantetheine moiety from coenzyme A to a Ser of acyl-carrier-protein. This chain is Holo-[acyl-carrier-protein] synthase, found in Shouchella clausii (strain KSM-K16) (Alkalihalobacillus clausii).